The primary structure comprises 516 residues: Beta-glucosidase 1 (516 aa).

An N-terminal signal peptide occupies residues 1–21 (MGHRLVVVLLLALLVAGAARA). Glutamine 68 serves as a coordination point for a beta-D-glucoside. A glycan (N-linked (GlcNAc...) asparagine) is linked at asparagine 96. A beta-D-glucoside-binding positions include histidine 169 and 214-215 (NE). Glutamate 215 (proton donor) is an active-site residue. Cysteine 234 and cysteine 237 are joined by a disulfide. N-linked (GlcNAc...) asparagine glycosylation is present at asparagine 290. Tyrosine 353 serves as a coordination point for a beta-D-glucoside. Asparagine 364 is a glycosylation site (N-linked (GlcNAc...) asparagine). An a beta-D-glucoside-binding site is contributed by glutamate 424. Catalysis depends on glutamate 424, which acts as the Nucleophile. Residue asparagine 432 is glycosylated (N-linked (GlcNAc...) asparagine). A beta-D-glucoside is bound by residues tryptophan 471, 478–479 (EW), and phenylalanine 487.

Belongs to the glycosyl hydrolase 1 family.

The enzyme catalyses Hydrolysis of terminal, non-reducing beta-D-glucosyl residues with release of beta-D-glucose.. In Oryza sativa subsp. japonica (Rice), this protein is Beta-glucosidase 1 (BGLU1).